The following is a 198-amino-acid chain: MNRQGVRLLPDRGGSLAAFGVGLAVVIILLGMGRPPICPCGVVRLWHGVVESAENSQQVSDWYSFSHLIHGFLFYGAAHIVWRRFGFAELSPRWALALAVLIEGSWEILENSPIIIDRYRSVTISWGYSGDSVLNSAADIGFMAAGFLFAARAPVLVTVVLGIGFELFTLWAIRDNLALNILMLVWPVEAVRVWQGGG.

5 helical membrane passes run 13 to 33, 62 to 82, 96 to 116, 153 to 173, and 177 to 197; these read GGSL…LGMG, WYSF…HIVW, LALA…PIII, APVL…LWAI, and LALN…WQGG.

The protein belongs to the UPF0314 family.

The protein localises to the cell membrane. The sequence is that of UPF0314 protein Saro_1818 from Novosphingobium aromaticivorans (strain ATCC 700278 / DSM 12444 / CCUG 56034 / CIP 105152 / NBRC 16084 / F199).